Reading from the N-terminus, the 264-residue chain is Short chain dehydrogenase CPUR_05429 (264 aa).

NADP(+) contacts are provided by isoleucine 24, aspartate 70, asparagine 97, and arginine 130. Catalysis depends on proton donor residues serine 146 and serine 147. The NADP(+) site is built by tyrosine 161, lysine 165, and threonine 196. The active-site Proton acceptor is tyrosine 161. The active-site Lowers pKa of active site Tyr is lysine 165.

This sequence belongs to the short-chain dehydrogenases/reductases (SDR) family.

Its pathway is pigment biosynthesis. In terms of biological role, short chain dehydrogenase; part of the ergochrome gene cluster responsible for the typical purple-black color of the ergot sclerotia. The ergochrome gene cluster produces several ergot pigments including the yellow ergochrome secalonic acid and its derivatives, as well as the red anthraquinones endocrocin and clavorubin. The pathway begins with the synthesis of atrochrysone thioester by the polyketide synthase (PKS) CPUR_05437. The atrochrysone carboxyl ACP thioesterase CPUR_05436 then breaks the thioester bond and releases the atrochrysone carboxylic acid from CPUR_05437. The atrochrysone carboxylic acid is then converted to atrochrysone which is further transformed into emodin anthrone. The next step is performed by the anthrone oxygenase CPUR_05434 that catalyzes the oxidation of emodinanthrone to emodin. Emodin is further modified to yield monodictyphenone via several steps involving CPUR_05427, CPUR_05428, CPUR_05429 and CPUR_05430. The short chain dehydrogenase/reductase CPUR_05418 then catalyzes the C-5 ketoreduction to give the xanthone skeleton of the monomeric units. Ergochromes formation requires further dimerization steps of different xanthone units, probably catalyzed by the cytochrome P450 monooxygenase CPUR_05419. CPUR_05425, CPUR_05426 and CPUR_05431 are unique to Claviceps, thus it is likely that they are involved in further modification of xanthone units or in their dimerization. The yellow ergochromes and the red anthraquinone pigments endocrocin and clavorubin are products from the same PKS derived precursors and the latter are likely shunt products in the pathway of xanthone biosynthesis. It is proposed that atrochrysone carboxylic acid released from the PKS CPUR_05437 can also be converted to endocrocin anthrone which is further oxidized into endocrocin by CPUR_05435. Endocrocin could be then modified to clavorubin, possibly by CPUR_05423 and CPUR_05431. Clavorubin is the principal anthraquinone metabolite produced by the cluster with a much higher yield compared to endocrocin. The protein is Short chain dehydrogenase CPUR_05429 of Claviceps purpurea (strain 20.1) (Ergot fungus).